Here is a 461-residue protein sequence, read N- to C-terminus: Argininosuccinate lyase (461 aa).

The protein belongs to the lyase 1 family. Argininosuccinate lyase subfamily.

The protein localises to the cytoplasm. The enzyme catalyses 2-(N(omega)-L-arginino)succinate = fumarate + L-arginine. The protein operates within amino-acid biosynthesis; L-arginine biosynthesis; L-arginine from L-ornithine and carbamoyl phosphate: step 3/3. The chain is Argininosuccinate lyase from Chlorobium chlorochromatii (strain CaD3).